The following is a 321-amino-acid chain: Glycerol-3-phosphate dehydrogenase [NAD(P)+] (321 aa).

NADPH contacts are provided by Ser-10, Trp-11, Arg-31, Arg-32, Tyr-47, and Lys-98. 3 residues coordinate sn-glycerol 3-phosphate: Lys-98, Gly-125, and Ser-127. Ala-129 contacts NADPH. Residues Lys-177, Asp-230, Ser-240, Arg-241, and Asn-242 each contribute to the sn-glycerol 3-phosphate site. Lys-177 acts as the Proton acceptor in catalysis. Residue Arg-241 coordinates NADPH. NADPH-binding residues include Val-265 and Glu-267.

Belongs to the NAD-dependent glycerol-3-phosphate dehydrogenase family.

The protein localises to the cytoplasm. It catalyses the reaction sn-glycerol 3-phosphate + NAD(+) = dihydroxyacetone phosphate + NADH + H(+). The catalysed reaction is sn-glycerol 3-phosphate + NADP(+) = dihydroxyacetone phosphate + NADPH + H(+). Its pathway is membrane lipid metabolism; glycerophospholipid metabolism. Functionally, catalyzes the reduction of the glycolytic intermediate dihydroxyacetone phosphate (DHAP) to sn-glycerol 3-phosphate (G3P), the key precursor for phospholipid synthesis. This is Glycerol-3-phosphate dehydrogenase [NAD(P)+] from Thermotoga sp. (strain RQ2).